Reading from the N-terminus, the 225-residue chain is uncharacterized protein (225 aa).

Residues 32-82 (PKDKKKQNDTENKKKQPKDGENDKQKEQAETQPFEWIQQKDADDKKESNTA) are disordered. 2 stretches are compositionally biased toward basic and acidic residues: residues 37 to 60 (KQNDTENKKKQPKDGENDKQKEQA) and 69 to 79 (QQKDADDKKES).

Belongs to the MG067/MG068/MG395 family.

This is an uncharacterized protein from Mycoplasma pneumoniae (strain ATCC 29342 / M129 / Subtype 1) (Mycoplasmoides pneumoniae).